Here is a 505-residue protein sequence, read N- to C-terminus: Glycerol kinase (505 aa).

Residue Thr-12 participates in ADP binding. Positions 12, 13, and 14 each coordinate ATP. Sn-glycerol 3-phosphate is bound at residue Thr-12. Residue Arg-16 participates in ADP binding. Arg-82, Glu-83, Tyr-134, and Asp-249 together coordinate sn-glycerol 3-phosphate. Arg-82, Glu-83, Tyr-134, Asp-249, and Gln-250 together coordinate glycerol. 2 residues coordinate ADP: Thr-271 and Gly-315. ATP-binding residues include Thr-271, Gly-315, Gln-319, and Gly-416. The ADP site is built by Gly-416 and Asn-420.

Belongs to the FGGY kinase family.

The enzyme catalyses glycerol + ATP = sn-glycerol 3-phosphate + ADP + H(+). It functions in the pathway polyol metabolism; glycerol degradation via glycerol kinase pathway; sn-glycerol 3-phosphate from glycerol: step 1/1. With respect to regulation, inhibited by fructose 1,6-bisphosphate (FBP). In terms of biological role, key enzyme in the regulation of glycerol uptake and metabolism. Catalyzes the phosphorylation of glycerol to yield sn-glycerol 3-phosphate. The protein is Glycerol kinase of Mycolicibacterium gilvum (strain PYR-GCK) (Mycobacterium gilvum (strain PYR-GCK)).